The following is a 103-amino-acid chain: Small ribosomal subunit protein uS10 (103 aa).

This sequence belongs to the universal ribosomal protein uS10 family. In terms of assembly, part of the 30S ribosomal subunit.

Involved in the binding of tRNA to the ribosomes. The sequence is that of Small ribosomal subunit protein uS10 from Psychromonas ingrahamii (strain DSM 17664 / CCUG 51855 / 37).